We begin with the raw amino-acid sequence, 152 residues long: MEDEEVAESWEEAADSGEIDRRLEKKLKITQKESRKSKSPPKVPIVIQDDSLPAGPPPQIRILKRPTSNGVVSGPNSASRPALPVKSLAQREAEYAEARKRILGSASPEEEQEKPILDRPTRISQPEDSRQPNNVIRQPLGPDGSQGFKQRR.

Residue Met1 is modified to N-acetylmethionine. Disordered stretches follow at residues 30–86 (TQKE…LPVK) and 99–152 (RKRI…KQRR). Ser37, Ser39, and Ser51 each carry phosphoserine. The SUZ domain occupies 42 to 107 (KVPIVIQDDS…ARKRILGSAS (66 aa)). Over residues 66 to 79 (PTSNGVVSGPNSAS) the composition is skewed to polar residues. Residues Ser105 and Ser107 each carry the phosphoserine modification. Residues 111 to 152 (EQEKPILDRPTRISQPEDSRQPNNVIRQPLGPDGSQGFKQRR) form the SUZ-C domain. The segment covering 113-130 (EKPILDRPTRISQPEDSR) has biased composition (basic and acidic residues).

This sequence belongs to the SZRD1 family.

This Bos taurus (Bovine) protein is SUZ RNA-binding domain-containing (SZRD1).